The chain runs to 158 residues: Class 10 plant pathogenesis-related protein 2A (158 aa).

Residue Asp-8 participates in trans-zeatin binding. Positions 32, 35, and 38 each coordinate Ca(2+). Residues Glu-60, His-69, Tyr-81, and Tyr-83 each contribute to the trans-zeatin site.

This sequence belongs to the BetVI family.

Its subcellular location is the cytoplasm. It is found in the cytosol. Class II ribonuclease (RNase). Binds to cytokinins. Interacts with melatonin. The sequence is that of Class 10 plant pathogenesis-related protein 2A from Lupinus luteus (European yellow lupine).